The following is a 452-amino-acid chain: Cytoplasmic tRNA 2-thiolation protein 2 (452 aa).

This sequence belongs to the CTU2/NCS2 family.

The protein localises to the cytoplasm. Its pathway is tRNA modification; 5-methoxycarbonylmethyl-2-thiouridine-tRNA biosynthesis. In terms of biological role, plays a central role in 2-thiolation of mcm(5)S(2)U at tRNA wobble positions of tRNA(Lys), tRNA(Glu) and tRNA(Gln). May act by forming a heterodimer with NCS6 that ligates sulfur from thiocarboxylated URM1 onto the uridine of tRNAs at wobble position. Prior mcm(5) tRNA modification by the elongator complex is required for 2-thiolation. May also be involved in protein urmylation. In Candida albicans (strain SC5314 / ATCC MYA-2876) (Yeast), this protein is Cytoplasmic tRNA 2-thiolation protein 2.